The sequence spans 144 residues: Large ribosomal subunit protein uL16 (144 aa).

Belongs to the universal ribosomal protein uL16 family. As to quaternary structure, part of the 50S ribosomal subunit.

Its function is as follows. Binds 23S rRNA and is also seen to make contacts with the A and possibly P site tRNAs. This chain is Large ribosomal subunit protein uL16, found in Bacillus pumilus (strain SAFR-032).